A 129-amino-acid chain; its full sequence is MAKDYSRTQRIGDQMQRELSFLIQREIKDPRLGMITVTAVEVARDLSHAKVFITVMGKEDSADEIERNLEILHEAAGFLRMQLGKSMKLRSVPQLHFSYDASVRRGVELSALIERAVAEDRLHTGKGEE.

The protein belongs to the RbfA family. As to quaternary structure, monomer. Binds 30S ribosomal subunits, but not 50S ribosomal subunits or 70S ribosomes.

The protein localises to the cytoplasm. In terms of biological role, one of several proteins that assist in the late maturation steps of the functional core of the 30S ribosomal subunit. Associates with free 30S ribosomal subunits (but not with 30S subunits that are part of 70S ribosomes or polysomes). Required for efficient processing of 16S rRNA. May interact with the 5'-terminal helix region of 16S rRNA. The protein is Ribosome-binding factor A of Azotobacter vinelandii (strain DJ / ATCC BAA-1303).